Here is a 317-residue protein sequence, read N- to C-terminus: Ribosomal RNA small subunit methyltransferase H (317 aa).

Residues 36-38, D56, F80, D102, and Q109 each bind S-adenosyl-L-methionine; that span reads GGH.

The protein belongs to the methyltransferase superfamily. RsmH family.

It is found in the cytoplasm. It carries out the reaction cytidine(1402) in 16S rRNA + S-adenosyl-L-methionine = N(4)-methylcytidine(1402) in 16S rRNA + S-adenosyl-L-homocysteine + H(+). In terms of biological role, specifically methylates the N4 position of cytidine in position 1402 (C1402) of 16S rRNA. The protein is Ribosomal RNA small subunit methyltransferase H of Baumannia cicadellinicola subsp. Homalodisca coagulata.